The chain runs to 387 residues: Carboxyaminopropylagmatine decarboxylase (387 aa).

K52 carries the N6-(pyridoxal phosphate)lysine modification.

It belongs to the Orn/Lys/Arg decarboxylase class-II family. The cofactor is pyridoxal 5'-phosphate.

The catalysed reaction is N(1)-[(S)-3-amino-3-carboxypropyl]agmatine + H(+) = N(1)-(3-aminopropyl)agmatine + CO2. It participates in amine and polyamine biosynthesis; spermidine biosynthesis. Decarboxylase involved in the biosynthesis of spermidine via the carboxyaminopropylagmatine (CAPA) pathway. Catalyzes the decarboxylation of CAPA to form aminopropylagmatine (APA). Can also decarboxylate carboxyspermidine and carboxynorspermidine, but not ornithine, arginine, lysine and meso-diaminopimelate. In Synechocystis sp. (strain ATCC 27184 / PCC 6803 / Kazusa), this protein is Carboxyaminopropylagmatine decarboxylase.